Consider the following 200-residue polypeptide: Holliday junction branch migration complex subunit RuvA (200 aa).

Positions 1 to 63 (MIALVQGRVA…EDSLTLFGFA (63 aa)) are domain I. Positions 64-138 (DADERDVFEL…DRLGPAQGAA (75 aa)) are domain II. The tract at residues 138–142 (APAAP) is flexible linker. The segment at 143–200 (VAVDDGADVVDALVGLGWPVRQAQDAVRGVLEDADGTAPDAAGLLRAALRSLAGDARG) is domain III.

Belongs to the RuvA family. In terms of assembly, homotetramer. Forms an RuvA(8)-RuvB(12)-Holliday junction (HJ) complex. HJ DNA is sandwiched between 2 RuvA tetramers; dsDNA enters through RuvA and exits via RuvB. An RuvB hexamer assembles on each DNA strand where it exits the tetramer. Each RuvB hexamer is contacted by two RuvA subunits (via domain III) on 2 adjacent RuvB subunits; this complex drives branch migration. In the full resolvosome a probable DNA-RuvA(4)-RuvB(12)-RuvC(2) complex forms which resolves the HJ.

It is found in the cytoplasm. The RuvA-RuvB-RuvC complex processes Holliday junction (HJ) DNA during genetic recombination and DNA repair, while the RuvA-RuvB complex plays an important role in the rescue of blocked DNA replication forks via replication fork reversal (RFR). RuvA specifically binds to HJ cruciform DNA, conferring on it an open structure. The RuvB hexamer acts as an ATP-dependent pump, pulling dsDNA into and through the RuvAB complex. HJ branch migration allows RuvC to scan DNA until it finds its consensus sequence, where it cleaves and resolves the cruciform DNA. The sequence is that of Holliday junction branch migration complex subunit RuvA from Beutenbergia cavernae (strain ATCC BAA-8 / DSM 12333 / CCUG 43141 / JCM 11478 / NBRC 16432 / NCIMB 13614 / HKI 0122).